The sequence spans 154 residues: Protein X (154 aa).

Positions 68–117 (PCALRFTSARRMETTVNAHQFLPKVLYKRTLGLSVMSTTDLEAYFKDCLF) are mitochondrial targeting sequence.

The protein belongs to the orthohepadnavirus protein X family. May form homodimer. May interact with host CEBPA, CFLAR, CREB1, DDB1, E4F1, HBXIP, HSPD1/HSP60, NFKBIA, POLR2E and SMAD4. Interacts with host SMC5-SMC6 complex and induces its degradation. Interacts with host TRPC4AP; leading to prevent ubiquitination of TRPC4AP. Interacts with host PLSCR1; this interaction promotes ubiquitination and degradation of HBx and impairs HBx-mediated cell proliferation. A fraction may be phosphorylated in insect cells and HepG2 cells, a human hepatoblastoma cell line. Phosphorylated in vitro by host protein kinase C or mitogen-activated protein kinase. N-acetylated in insect cells.

Its subcellular location is the host cytoplasm. It localises to the host nucleus. The protein resides in the host mitochondrion. Multifunctional protein that plays a role in silencing host antiviral defenses and promoting viral transcription. Does not seem to be essential for HBV infection. May be directly involved in development of cirrhosis and liver cancer (hepatocellular carcinoma). Most of cytosolic activities involve modulation of cytosolic calcium. The effect on apoptosis is controversial depending on the cell types in which the studies have been conducted. May induce apoptosis by localizing in mitochondria and causing loss of mitochondrial membrane potential. May also modulate apoptosis by binding host CFLAR, a key regulator of the death-inducing signaling complex (DISC). Promotes viral transcription by using the host E3 ubiquitin ligase DDB1 to target the SMC5-SMC6 complex to proteasomal degradation. This host complex would otherwise bind to viral episomal DNA, and prevents its transcription. Moderately stimulates transcription of many different viral and cellular transcription elements. Promoters and enhancers stimulated by HBx contain DNA binding sites for NF-kappa-B, AP-1, AP-2, c-EBP, ATF/CREB, or the calcium-activated factor NF-AT. This is Protein X from Homo sapiens (Human).